Reading from the N-terminus, the 299-residue chain is Cysteine synthase B (299 aa).

Residue lysine 40 is modified to N6-(pyridoxal phosphate)lysine. Residues asparagine 70, 174–178, and serine 261 contribute to the pyridoxal 5'-phosphate site; that span reads GTGGT.

Belongs to the cysteine synthase/cystathionine beta-synthase family. Pyridoxal 5'-phosphate serves as cofactor.

It carries out the reaction O-acetyl-L-serine + hydrogen sulfide = L-cysteine + acetate. The protein operates within amino-acid biosynthesis; L-cysteine biosynthesis; L-cysteine from L-serine: step 2/2. In Campylobacter jejuni subsp. jejuni serotype O:2 (strain ATCC 700819 / NCTC 11168), this protein is Cysteine synthase B (cysM).